The following is a 163-amino-acid chain: Neurotrophin-3 (163 aa).

The first 3 residues, 1 to 3 (IQS), serve as a signal peptide directing secretion. Residues 4 to 119 (TSMDQGILTE…VLNRTSRRKR (116 aa)) constitute a propeptide that is removed on maturation. N-linked (GlcNAc...) asparagine glycosylation is present at Asn112. A disordered region spans residues 114 to 133 (TSRRKREGKSHRGEYSVCDS). Positions 123-133 (SHRGEYSVCDS) are enriched in basic and acidic residues.

Belongs to the NGF-beta family.

It is found in the secreted. Its function is as follows. Seems to promote the survival of visceral and proprioceptive sensory neurons. The sequence is that of Neurotrophin-3 (NTF3) from Lichanura trivirgata (Rosy boa).